A 122-amino-acid polypeptide reads, in one-letter code: Large ribosomal subunit protein uL14 (122 aa).

It belongs to the universal ribosomal protein uL14 family. As to quaternary structure, part of the 50S ribosomal subunit. Forms a cluster with proteins L3 and L19. In the 70S ribosome, L14 and L19 interact and together make contacts with the 16S rRNA in bridges B5 and B8.

Functionally, binds to 23S rRNA. Forms part of two intersubunit bridges in the 70S ribosome. The chain is Large ribosomal subunit protein uL14 from Mycobacterium marinum (strain ATCC BAA-535 / M).